We begin with the raw amino-acid sequence, 834 residues long: Protein translocase subunit SecA (834 aa).

ATP contacts are provided by residues Gln-85, 103–107 (GEGKT), and Asp-491. Positions 818, 820, 829, and 830 each coordinate Zn(2+).

This sequence belongs to the SecA family. Monomer and homodimer. Part of the essential Sec protein translocation apparatus which comprises SecA, SecYEG and auxiliary proteins SecDF. Other proteins may also be involved. Zn(2+) is required as a cofactor.

The protein localises to the cell membrane. Its subcellular location is the cytoplasm. The enzyme catalyses ATP + H2O + cellular proteinSide 1 = ADP + phosphate + cellular proteinSide 2.. Part of the Sec protein translocase complex. Interacts with the SecYEG preprotein conducting channel. Has a central role in coupling the hydrolysis of ATP to the transfer of proteins into and across the cell membrane, serving as an ATP-driven molecular motor driving the stepwise translocation of polypeptide chains across the membrane. The protein is Protein translocase subunit SecA of Clostridium kluyveri (strain ATCC 8527 / DSM 555 / NBRC 12016 / NCIMB 10680 / K1).